The sequence spans 574 residues: Type II methyltransferase M.PaeR7I (574 aa).

Belongs to the N(4)/N(6)-methyltransferase family. As to quaternary structure, monomer.

It catalyses the reaction a 2'-deoxyadenosine in DNA + S-adenosyl-L-methionine = an N(6)-methyl-2'-deoxyadenosine in DNA + S-adenosyl-L-homocysteine + H(+). In terms of biological role, a gamma subtype methylase, recognizes the double-stranded sequence 5'-CTCGAG-3', methylates A-5 on both strands, and protects the DNA from cleavage by the PaeR7I endonuclease. The protein is Type II methyltransferase M.PaeR7I (paeR7IM) of Pseudomonas aeruginosa.